A 199-amino-acid chain; its full sequence is TATA-box-binding protein (199 aa).

2 tandem repeats follow at residues 10 to 86 and 101 to 177.

Belongs to the TBP family.

General factor that plays a role in the activation of archaeal genes transcribed by RNA polymerase. Binds specifically to the TATA box promoter element which lies close to the position of transcription initiation. This is TATA-box-binding protein from Pyrobaculum calidifontis (strain DSM 21063 / JCM 11548 / VA1).